A 96-amino-acid polypeptide reads, in one-letter code: Prokineticin Bm8-b (96 aa).

The signal sequence occupies residues 1-19; sequence MKCFAQIVVLLLVIAFSHG. Cystine bridges form between C32/C50, C37/C78, C60/C86, and C80/C95.

Belongs to the AVIT (prokineticin) family. As to expression, expressed by the skin glands.

The protein resides in the secreted. Its function is as follows. Potent agonist for both PKR1/PROKR1 and PKR2/PROKR2, and inducer of a potent and long-lasting hyperalgesia. Also potentiates capsaicin-induced TRPV1 current, when tested on DRG neurons. At subnanomolar concentrations, this protein both induces potent chemotaxis of macrophages and stimulates LPS-induced production of the pro-inflammatory cytokines IL-1 and IL-12. In vivo, potently stimulates the contraction of the guinea-pig gastrointestinal (GI) smooth muscle (nanomolar concentration). In Bombina maxima (Giant fire-bellied toad), this protein is Prokineticin Bm8-b.